The following is a 465-amino-acid chain: Cysteine--tRNA ligase (465 aa).

Cys-29 serves as a coordination point for Zn(2+). The 'HIGH' region signature appears at 31 to 41; sequence PTVYNYIHIGN. Zn(2+) contacts are provided by Cys-209, His-234, and Glu-238. The 'KMSKS' region signature appears at 266-270; it reads KMSKS. Lys-269 is a binding site for ATP. Ser-270 carries the post-translational modification Phosphoserine.

This sequence belongs to the class-I aminoacyl-tRNA synthetase family. Monomer. It depends on Zn(2+) as a cofactor.

Its subcellular location is the cytoplasm. The enzyme catalyses tRNA(Cys) + L-cysteine + ATP = L-cysteinyl-tRNA(Cys) + AMP + diphosphate. The sequence is that of Cysteine--tRNA ligase from Bacillus cereus (strain AH187).